The chain runs to 329 residues: MADKSTEVEKAIDPIIDLGNLLFIDREPLQGDAEEGLEERARKNTQLLFNNIWQLEQKRVEEAIIVTLPAATYRLPREKKLPEKKEPTKWEKYAKEKGIEKRKKDKKVFDEATKEWKPTYGYRRGNDNTKDWLIEIPDNAEDPNKDFFAERREKKKERVAKNEMQRMKNLARQMKTTVKTGPSTDKMIGVGIDAKDKSKQDVRFAVDRAKLATASAGKFQEGLKGEKANIKTGKKRKFESNEAPVSAEKERALQILQRMKSKKAKIVEEKASAVAGPLREKKEKQEKKGAKEATRQKSQIHRQQWFKNKVDSKKKGTGGAKKKGANKRK.

Disordered stretches follow at residues 227 to 248 (KANI…VSAE) and 262 to 329 (KKAK…NKRK). Residues 278-295 (LREKKEKQEKKGAKEATR) show a composition bias toward basic and acidic residues. Basic residues predominate over residues 320-329 (AKKKGANKRK).

Belongs to the RRS1 family.

The protein localises to the nucleus. Its subcellular location is the nucleolus. Functionally, involved in ribosomal large subunit assembly. The protein is Ribosome biogenesis regulatory protein homolog of Caenorhabditis briggsae.